The sequence spans 474 residues: tRNA-2-methylthio-N(6)-dimethylallyladenosine synthase (474 aa).

Residues 3–120 (KKLHIKTWGC…LPDMIDQVRR (118 aa)) form the MTTase N-terminal domain. Residues Cys-12, Cys-49, Cys-83, Cys-157, Cys-161, and Cys-164 each coordinate [4Fe-4S] cluster. The Radical SAM core domain maps to 143-375 (RAEGPTAFVS…QDRITQQAMR (233 aa)). Residues 378–441 (RHMMGTVQRI…TNSLRGKFIR (64 aa)) enclose the TRAM domain.

Belongs to the methylthiotransferase family. MiaB subfamily. Monomer. The cofactor is [4Fe-4S] cluster.

It localises to the cytoplasm. It catalyses the reaction N(6)-dimethylallyladenosine(37) in tRNA + (sulfur carrier)-SH + AH2 + 2 S-adenosyl-L-methionine = 2-methylsulfanyl-N(6)-dimethylallyladenosine(37) in tRNA + (sulfur carrier)-H + 5'-deoxyadenosine + L-methionine + A + S-adenosyl-L-homocysteine + 2 H(+). In terms of biological role, catalyzes the methylthiolation of N6-(dimethylallyl)adenosine (i(6)A), leading to the formation of 2-methylthio-N6-(dimethylallyl)adenosine (ms(2)i(6)A) at position 37 in tRNAs that read codons beginning with uridine. This Shewanella sp. (strain ANA-3) protein is tRNA-2-methylthio-N(6)-dimethylallyladenosine synthase.